A 304-amino-acid chain; its full sequence is RNA polymerase II holoenzyme cyclin-like subunit (304 aa).

The 132-residue stretch at Thr-43–Ile-174 folds into the Cyclin N-terminal domain.

It belongs to the cyclin family. Cyclin C subfamily. As to quaternary structure, component of the SRB8-11 complex, a regulatory module of the Mediator complex.

The protein resides in the nucleus. Component of the SRB8-11 complex. The SRB8-11 complex is a regulatory module of the Mediator complex which is itself involved in regulation of basal and activated RNA polymerase II-dependent transcription. The SRB8-11 complex may be involved in the transcriptional repression of a subset of genes regulated by Mediator. It may inhibit the association of the Mediator complex with RNA polymerase II to form the holoenzyme complex. The SRB8-11 complex phosphorylates the C-terminal domain (CTD) of the largest subunit of RNA polymerase II. The protein is RNA polymerase II holoenzyme cyclin-like subunit (SSN8) of Kluyveromyces lactis (strain ATCC 8585 / CBS 2359 / DSM 70799 / NBRC 1267 / NRRL Y-1140 / WM37) (Yeast).